A 386-amino-acid polypeptide reads, in one-letter code: Putative acid--amine ligase YgiC (386 aa).

100–102 (RLD) is a binding site for ATP. The Mg(2+) site is built by Asp-102, Glu-115, and Asn-117. ATP-binding positions include Lys-267, Lys-302, Gly-309, Gln-336, and 371 to 373 (LIT).

The protein belongs to the glutathionylspermidine synthase preATP-grasp family.

Functionally, may be a ligase forming an amide bond. Shows ATPase activity. The chain is Putative acid--amine ligase YgiC (ygiC) from Escherichia coli O157:H7.